A 478-amino-acid polypeptide reads, in one-letter code: Flotillin-like protein 1 (478 aa).

Cys-35 carries the S-palmitoyl cysteine lipid modification. Positions 235 to 277 (ENQREAEVAEANSELAKKKAAWTMAAQVAELEAAKAVALREAE) form a coiled coil.

Belongs to the band 7/mec-2 family. Flotillin subfamily. In terms of processing, may be palmitoylated. In terms of tissue distribution, expressed in all plant organs. Primarily expressed in vascular tissues. No change in spatial expression in root upon inoculation. Expression limited to the nodule vascular tissue.

It is found in the cell membrane. Its subcellular location is the membrane. The protein resides in the caveola. May act as a scaffolding protein within caveolar membranes, functionally participating in formation of caveolae or caveolae-like vesicles. May be involved in nodule formation. The chain is Flotillin-like protein 1 (FLOT1) from Medicago truncatula (Barrel medic).